We begin with the raw amino-acid sequence, 342 residues long: Ribosomal RNA small subunit methyltransferase C (342 aa).

This sequence belongs to the methyltransferase superfamily. RsmC family. In terms of assembly, monomer.

It localises to the cytoplasm. The catalysed reaction is guanosine(1207) in 16S rRNA + S-adenosyl-L-methionine = N(2)-methylguanosine(1207) in 16S rRNA + S-adenosyl-L-homocysteine + H(+). Its function is as follows. Specifically methylates the guanine in position 1207 of 16S rRNA in the 30S particle. The sequence is that of Ribosomal RNA small subunit methyltransferase C from Salmonella paratyphi A (strain ATCC 9150 / SARB42).